Consider the following 227-residue polypeptide: PKHD-type hydroxylase ACIAD0531 (227 aa).

The region spanning 78–178 (HIIPPLFNRY…RFASFFWVQS (101 aa)) is the Fe2OG dioxygenase domain. The Fe cation site is built by His96, Asp98, and His159. Residue Arg169 participates in 2-oxoglutarate binding.

Fe(2+) is required as a cofactor. L-ascorbate serves as cofactor.

This Acinetobacter baylyi (strain ATCC 33305 / BD413 / ADP1) protein is PKHD-type hydroxylase ACIAD0531.